The chain runs to 317 residues: 2,3-dihydroxyphenylpropionate/2,3-dihydroxicinnamic acid 1,2-dioxygenase (317 aa).

Catalysis depends on histidine 115, which acts as the Proton donor. Histidine 179 (proton acceptor) is an active-site residue.

The protein belongs to the LigB/MhpB extradiol dioxygenase family. As to quaternary structure, homotetramer. Fe(2+) is required as a cofactor.

The enzyme catalyses 3-(2,3-dihydroxyphenyl)propanoate + O2 = (2Z,4E)-2-hydroxy-6-oxonona-2,4-dienedioate + H(+). The catalysed reaction is (2E)-3-(2,3-dihydroxyphenyl)prop-2-enoate + O2 = (2Z,4E,7E)-2-hydroxy-6-oxonona-2,4,7-trienedioate + H(+). It functions in the pathway aromatic compound metabolism; 3-phenylpropanoate degradation. Functionally, catalyzes the non-heme iron(II)-dependent oxidative cleavage of 2,3-dihydroxyphenylpropionic acid and 2,3-dihydroxicinnamic acid into 2-hydroxy-6-ketononadienedioate and 2-hydroxy-6-ketononatrienedioate, respectively. The protein is 2,3-dihydroxyphenylpropionate/2,3-dihydroxicinnamic acid 1,2-dioxygenase of Burkholderia vietnamiensis (strain G4 / LMG 22486) (Burkholderia cepacia (strain R1808)).